Here is a 352-residue protein sequence, read N- to C-terminus: Ribosomal RNA large subunit methyltransferase M (352 aa).

Residues Ser184, 217–220 (APGG), Asp236, Asp256, and Asp272 each bind S-adenosyl-L-methionine. Lys301 acts as the Proton acceptor in catalysis.

The protein belongs to the class I-like SAM-binding methyltransferase superfamily. RNA methyltransferase RlmE family. RlmM subfamily. In terms of assembly, monomer.

The protein localises to the cytoplasm. The enzyme catalyses cytidine(2498) in 23S rRNA + S-adenosyl-L-methionine = 2'-O-methylcytidine(2498) in 23S rRNA + S-adenosyl-L-homocysteine + H(+). Functionally, catalyzes the 2'-O-methylation at nucleotide C2498 in 23S rRNA. This chain is Ribosomal RNA large subunit methyltransferase M, found in Pseudomonas aeruginosa (strain UCBPP-PA14).